A 147-amino-acid chain; its full sequence is MKLVVQRVTDASVTVDGAVAGRIGPGIMALVGVTHEDTEEDAAYLADKIVNLRIFDDESGKMNLSLLDTGGEILSVSQFTLYGETKKGRRPNFMNAAKPDQALLLYEKWNELLREKGVKVETGIFGAMMDVQLTNSGPVTLIMDSKQ.

Residues 137–138 carry the Gly-cisPro motif, important for rejection of L-amino acids motif; it reads GP.

It belongs to the DTD family. Homodimer.

The protein resides in the cytoplasm. It carries out the reaction glycyl-tRNA(Ala) + H2O = tRNA(Ala) + glycine + H(+). The enzyme catalyses a D-aminoacyl-tRNA + H2O = a tRNA + a D-alpha-amino acid + H(+). Functionally, an aminoacyl-tRNA editing enzyme that deacylates mischarged D-aminoacyl-tRNAs. Also deacylates mischarged glycyl-tRNA(Ala), protecting cells against glycine mischarging by AlaRS. Acts via tRNA-based rather than protein-based catalysis; rejects L-amino acids rather than detecting D-amino acids in the active site. By recycling D-aminoacyl-tRNA to D-amino acids and free tRNA molecules, this enzyme counteracts the toxicity associated with the formation of D-aminoacyl-tRNA entities in vivo and helps enforce protein L-homochirality. Upon expression in B.subtilis strain 168 confers resistance to D-Tyr and D-Asp, suggesting it acts on both of these amino acids. The sequence is that of D-aminoacyl-tRNA deacylase from Bacillus amyloliquefaciens (Bacillus velezensis).